The following is a 177-amino-acid chain: Large ribosomal subunit protein uL5 (177 aa).

Belongs to the universal ribosomal protein uL5 family. In terms of assembly, part of the 50S ribosomal subunit; part of the 5S rRNA/L5/L18/L25 subcomplex. Contacts the 5S rRNA and the P site tRNA. Forms a bridge to the 30S subunit in the 70S ribosome.

Its function is as follows. This is one of the proteins that bind and probably mediate the attachment of the 5S RNA into the large ribosomal subunit, where it forms part of the central protuberance. In the 70S ribosome it contacts protein S13 of the 30S subunit (bridge B1b), connecting the 2 subunits; this bridge is implicated in subunit movement. Contacts the P site tRNA; the 5S rRNA and some of its associated proteins might help stabilize positioning of ribosome-bound tRNAs. The protein is Large ribosomal subunit protein uL5 of Anaplasma phagocytophilum (strain HZ).